We begin with the raw amino-acid sequence, 306 residues long: D-alanine--D-alanine ligase (306 aa).

Residues lysine 101–glutamate 303 enclose the ATP-grasp domain. An ATP-binding site is contributed by isoleucine 134–threonine 189. Residues aspartate 257, glutamate 270, and asparagine 272 each contribute to the Mg(2+) site.

The protein belongs to the D-alanine--D-alanine ligase family. Mg(2+) is required as a cofactor. Requires Mn(2+) as cofactor.

It is found in the cytoplasm. The catalysed reaction is 2 D-alanine + ATP = D-alanyl-D-alanine + ADP + phosphate + H(+). The protein operates within cell wall biogenesis; peptidoglycan biosynthesis. Cell wall formation. This chain is D-alanine--D-alanine ligase, found in Erwinia tasmaniensis (strain DSM 17950 / CFBP 7177 / CIP 109463 / NCPPB 4357 / Et1/99).